The primary structure comprises 199 residues: uncharacterized protein (199 aa).

A signal peptide spans 1 to 28; the sequence is MKKLATVGSLIVTSTLVFSSMPFQNAHA.

It is found in the secreted. This is an uncharacterized protein from Staphylococcus aureus (strain NCTC 8325 / PS 47).